We begin with the raw amino-acid sequence, 364 residues long: Endoglucanase A (364 aa).

Glu169 serves as the catalytic Proton donor. Glu293 acts as the Nucleophile in catalysis.

The protein belongs to the glycosyl hydrolase 5 (cellulase A) family.

Its subcellular location is the cytoplasm. The enzyme catalyses Endohydrolysis of (1-&gt;4)-beta-D-glucosidic linkages in cellulose, lichenin and cereal beta-D-glucans.. The catalysed reaction is Endohydrolysis of (1-&gt;4)-beta-D-xylosidic linkages in xylans.. Hydrolyzes both carboxymethylcellulose and xylan. Probably has a role in hydrolyzing oligosaccharides derived from cellulose, which are transported across the cell wall. This Ruminococcus albus protein is Endoglucanase A (celA).